A 318-amino-acid polypeptide reads, in one-letter code: MIKLGIVMDPIASINIKKDSSFAMMLEAQRRGYEIHYMEMNDLHLEQGVALADTKVVELKEDPSGWYQFKSEQTIALSELDAILMRKDPPFDTEYIYATYILERAEDEGVLVVNKPQSLRDCNEKLFTAWFPELTPITMVTRKAEKIKAFREQHGDVILKPLDGMGGASIFRVKEGDPNLSVIIETLTNHGQNYCMAQTFVPDISNGDKRILVVDGEPMPYCLARIPAKGETRGNLAAGGRGEPRPLSETDKKIALAVAPTLKEKGLLFVGLDVIGDKLTEINVTSPTCIREIEAAYDISITGKLMDAIERRLKATAM.

The 187-residue stretch at 124-310 (EKLFTAWFPE…ITGKLMDAIE (187 aa)) folds into the ATP-grasp domain. 150–207 (FREQHGDVILKPLDGMGGASIFRVKEGDPNLSVIIETLTNHGQNYCMAQTFVPDISNG) lines the ATP pocket. Mg(2+) contacts are provided by Glu-281 and Asn-283.

It belongs to the prokaryotic GSH synthase family. Requires Mg(2+) as cofactor. It depends on Mn(2+) as a cofactor.

The enzyme catalyses gamma-L-glutamyl-L-cysteine + glycine + ATP = glutathione + ADP + phosphate + H(+). It participates in sulfur metabolism; glutathione biosynthesis; glutathione from L-cysteine and L-glutamate: step 2/2. This chain is Glutathione synthetase, found in Vibrio cholerae serotype O1 (strain ATCC 39315 / El Tor Inaba N16961).